Reading from the N-terminus, the 356-residue chain is Branched-chain-amino-acid aminotransferase 6 (356 aa).

An N6-(pyridoxal phosphate)lysine modification is found at Lys-199.

This sequence belongs to the class-IV pyridoxal-phosphate-dependent aminotransferase family. Requires pyridoxal 5'-phosphate as cofactor.

Its subcellular location is the cytoplasm. The catalysed reaction is L-leucine + 2-oxoglutarate = 4-methyl-2-oxopentanoate + L-glutamate. The enzyme catalyses L-isoleucine + 2-oxoglutarate = (S)-3-methyl-2-oxopentanoate + L-glutamate. It carries out the reaction L-valine + 2-oxoglutarate = 3-methyl-2-oxobutanoate + L-glutamate. The protein operates within amino-acid biosynthesis; L-isoleucine biosynthesis; L-isoleucine from 2-oxobutanoate: step 4/4. It participates in amino-acid biosynthesis; L-leucine biosynthesis; L-leucine from 3-methyl-2-oxobutanoate: step 4/4. Its pathway is amino-acid biosynthesis; L-valine biosynthesis; L-valine from pyruvate: step 4/4. Converts 2-oxo acids to branched-chain amino acids. Acts on leucine, isoleucine and valine. The chain is Branched-chain-amino-acid aminotransferase 6 (BCAT6) from Arabidopsis thaliana (Mouse-ear cress).